The sequence spans 316 residues: Cuticle collagen 12 (316 aa).

The first 36 residues, Met-1–Ala-36, serve as a signal peptide directing secretion. Low complexity-rich tracts occupy residues Ser-127–Asp-157 and Ala-183–Leu-204. Positions Ser-127–Tyr-316 are disordered. Triple-helical region stretches follow at residues Gly-128–Asp-157, Gly-176–Ala-202, Gly-206–Val-235, Gly-240–Ser-266, and Gly-269–Cys-304. Pro residues predominate over residues Pro-205–Ala-217. The segment covering Gln-219–Gln-234 has biased composition (low complexity). Positions Thr-241–Pro-251 are enriched in pro residues. 2 stretches are compositionally biased toward low complexity: residues Ala-256–Ser-266 and Asp-276–Asp-295. A compositionally biased stretch (pro residues) spans Cys-307–Tyr-316.

The protein belongs to the cuticular collagen family. As to quaternary structure, collagen polypeptide chains are complexed within the cuticle by disulfide bonds and other types of covalent cross-links.

In terms of biological role, nematode cuticles are composed largely of collagen-like proteins. The cuticle functions both as an exoskeleton and as a barrier to protect the worm from its environment. This chain is Cuticle collagen 12 (col-12), found in Caenorhabditis elegans.